The following is a 199-amino-acid chain: ATP-dependent Clp protease proteolytic subunit (199 aa).

Serine 97 (nucleophile) is an active-site residue. Histidine 122 is an active-site residue.

The protein belongs to the peptidase S14 family. In terms of assembly, fourteen ClpP subunits assemble into 2 heptameric rings which stack back to back to give a disk-like structure with a central cavity, resembling the structure of eukaryotic proteasomes.

The protein resides in the cytoplasm. It carries out the reaction Hydrolysis of proteins to small peptides in the presence of ATP and magnesium. alpha-casein is the usual test substrate. In the absence of ATP, only oligopeptides shorter than five residues are hydrolyzed (such as succinyl-Leu-Tyr-|-NHMec, and Leu-Tyr-Leu-|-Tyr-Trp, in which cleavage of the -Tyr-|-Leu- and -Tyr-|-Trp bonds also occurs).. In terms of biological role, cleaves peptides in various proteins in a process that requires ATP hydrolysis. Has a chymotrypsin-like activity. Plays a major role in the degradation of misfolded proteins. In Geotalea daltonii (strain DSM 22248 / JCM 15807 / FRC-32) (Geobacter daltonii), this protein is ATP-dependent Clp protease proteolytic subunit.